Consider the following 332-residue polypeptide: Nicotianamine synthase 1 (332 aa).

It belongs to the nicotianamine synthase (NAS)-like family. In terms of tissue distribution, expressed in roots.

It catalyses the reaction 3 S-adenosyl-L-methionine = nicotianamine + 3 S-methyl-5'-thioadenosine + 3 H(+). Functionally, synthesizes nicotianamine, a polyamine that is the first intermediate in the synthesis of the phytosiderophores of the mugineic acid type found in gramineae which serve as a sensor for the physiological iron status within the plant, and/or might be involved in the transport of iron. The chain is Nicotianamine synthase 1 (NAS1) from Oryza sativa subsp. indica (Rice).